The following is a 254-amino-acid chain: MVPWLGPDDPFPPVERALGPATGAPGLLAASADLLPSRLIDAYLRGIFPWYSDGQPVLWWSPDPRMILVPDEFKVSPSLKKTLKRVLRDPAWEVRVDHDFRGVMRACAQAPRRGQRGTWITAEIIDAYSSLYRSGNAHSIETWHDGRRVGGLYGVAFGQMFFGESMYADVTDASKIALAALVAHLREHGLEMIDCQQNTSHLASLGGREIARKAFVAHVRRAVAEPPIPWQFDKRVLAALTGRTEPAAPSGIER.

This sequence belongs to the L/F-transferase family.

It is found in the cytoplasm. The catalysed reaction is N-terminal L-lysyl-[protein] + L-leucyl-tRNA(Leu) = N-terminal L-leucyl-L-lysyl-[protein] + tRNA(Leu) + H(+). It carries out the reaction N-terminal L-arginyl-[protein] + L-leucyl-tRNA(Leu) = N-terminal L-leucyl-L-arginyl-[protein] + tRNA(Leu) + H(+). It catalyses the reaction L-phenylalanyl-tRNA(Phe) + an N-terminal L-alpha-aminoacyl-[protein] = an N-terminal L-phenylalanyl-L-alpha-aminoacyl-[protein] + tRNA(Phe). Its function is as follows. Functions in the N-end rule pathway of protein degradation where it conjugates Leu, Phe and, less efficiently, Met from aminoacyl-tRNAs to the N-termini of proteins containing an N-terminal arginine or lysine. The sequence is that of Leucyl/phenylalanyl-tRNA--protein transferase from Burkholderia multivorans (strain ATCC 17616 / 249).